The chain runs to 760 residues: Xaa-Pro dipeptidyl-peptidase (760 aa).

Active-site charge relay system residues include S349, D469, and H499.

Belongs to the peptidase S15 family. Homodimer.

Its subcellular location is the cytoplasm. The catalysed reaction is Hydrolyzes Xaa-Pro-|- bonds to release unblocked, N-terminal dipeptides from substrates including Ala-Pro-|-p-nitroanilide and (sequentially) Tyr-Pro-|-Phe-Pro-|-Gly-Pro-|-Ile.. Removes N-terminal dipeptides sequentially from polypeptides having unsubstituted N-termini provided that the penultimate residue is proline. This is Xaa-Pro dipeptidyl-peptidase from Streptococcus pyogenes serotype M12 (strain MGAS9429).